Here is a 214-residue protein sequence, read N- to C-terminus: Ribosomal RNA small subunit methyltransferase G (214 aa).

S-adenosyl-L-methionine-binding positions include Gly73, Leu78, 124-125 (VE), and Arg139.

Belongs to the methyltransferase superfamily. RNA methyltransferase RsmG family.

Its subcellular location is the cytoplasm. The catalysed reaction is guanosine(527) in 16S rRNA + S-adenosyl-L-methionine = N(7)-methylguanosine(527) in 16S rRNA + S-adenosyl-L-homocysteine. Functionally, specifically methylates the N7 position of guanine in position 527 of 16S rRNA. In Aeromonas hydrophila subsp. hydrophila (strain ATCC 7966 / DSM 30187 / BCRC 13018 / CCUG 14551 / JCM 1027 / KCTC 2358 / NCIMB 9240 / NCTC 8049), this protein is Ribosomal RNA small subunit methyltransferase G.